The primary structure comprises 277 residues: Proteasome subunit beta type-7 (277 aa).

Positions Met1–Gly43 are cleaved as a propeptide — removed in mature form. The active-site Nucleophile is Thr44.

The protein belongs to the peptidase T1B family. In terms of assembly, the 26S proteasome consists of a 20S proteasome core and two 19S regulatory subunits. The 20S proteasome core is a barrel-shaped complex made of 28 subunits that are arranged in four stacked rings. The two outer rings are each formed by seven alpha subunits, and the two inner rings are formed by seven beta subunits. The proteolytic activity is exerted by three beta-subunits PSMB5, PSMB6 and PSMB7.

It is found in the cytoplasm. It localises to the nucleus. The catalysed reaction is Cleavage of peptide bonds with very broad specificity.. In terms of biological role, component of the 20S core proteasome complex involved in the proteolytic degradation of most intracellular proteins. This complex plays numerous essential roles within the cell by associating with different regulatory particles. Associated with two 19S regulatory particles, forms the 26S proteasome and thus participates in the ATP-dependent degradation of ubiquitinated proteins. The 26S proteasome plays a key role in the maintenance of protein homeostasis by removing misfolded or damaged proteins that could impair cellular functions, and by removing proteins whose functions are no longer required. Associated with the PA200 or PA28, the 20S proteasome mediates ubiquitin-independent protein degradation. This type of proteolysis is required in several pathways including spermatogenesis (20S-PA200 complex) or generation of a subset of MHC class I-presented antigenic peptides (20S-PA28 complex). Within the 20S core complex, PSMB7 displays a trypsin-like activity. The sequence is that of Proteasome subunit beta type-7 (Psmb7) from Mus musculus (Mouse).